Here is a 596-residue protein sequence, read N- to C-terminus: MGKKHKKHKSEWRSYDAGELGSPGDQSQYYVDKPLEKPLKLVLKVGGSEVTELSGSGHDSSFYEDRSDHERERHKEKKKKKKKKSEKEKDKYLDEDERRRRKEEKKRKREKEQCDSEGETEVFESVRKVDIEATDRPVRACRTHPAENESTPLQQLLEYFLRQLQRKDPNGFFAFPVTDQIAPGYFMIIKNPMDFSTMKEKISQNEYKSVTEFKADFKLMCDNAMTYNRPETVYYKLAKKLLHTGFKMMSKQAALLGDEDTTTEEPTPEIIMPTAAEVVKKSKKPSKDMFRVMEEDQSSIFEPEGNACSLTDSTAEEHVLALVEHAADEARDKINRYLPNCRIGYLKKNADGTLIYTVVNGDPENEEEDTHLVDLSSLSSKLLPSFTTLGFKEDRRHKVTFLNSTGTALSLQNNTLFTNLKPDQIDLMYAGYGDDTGIQCALSLQEFVKDCGSFAKRMVNDLLDQITGGDHSRTIYQMAGSEREGSSNSVLDYMALKTYSDVSLDMSMLSSLDKVKKELEHEDSHLNLDDASKLLPDFHDVHNDRGGSRPSSSSSVSNNSERDHHLGSPSRISVGEQQDIHDPYEFLQSPETENQN.

Positions 1-10 are enriched in basic residues; the sequence is MGKKHKKHKS. Disordered regions lie at residues 1 to 31 and 49 to 119; these read MGKK…QYYV and EVTE…SEGE. Positions 61–73 are enriched in basic and acidic residues; the sequence is SFYEDRSDHERER. Positions 74–84 are enriched in basic residues; the sequence is HKEKKKKKKKK. Residues 85–98 show a composition bias toward basic and acidic residues; it reads SEKEKDKYLDEDER. Residues 99 to 109 are compositionally biased toward basic residues; sequence RRRKEEKKRKR. One can recognise a Bromo domain in the interval 148-252; it reads NESTPLQQLL…HTGFKMMSKQ (105 aa). The histone H4K5ac H4K8ac and histone H4K5bu H4K8bu binding stretch occupies residues 226–228; that stretch reads TYN. Residues 537–547 show a composition bias toward basic and acidic residues; the sequence is DFHDVHNDRGG. Positions 537 to 596 are disordered; that stretch reads DFHDVHNDRGGSRPSSSSSVSNNSERDHHLGSPSRISVGEQQDIHDPYEFLQSPETENQN. Over residues 548-559 the composition is skewed to low complexity; the sequence is SRPSSSSSVSNN.

Binds acetylated histones H3 and H4. Binds butyrylated histone H4.

It is found in the nucleus. In terms of biological role, plays a role in chromatin remodeling and regulation of transcription. Acts as a chromatin reader that recognizes and binds acylated histones: binds histones that are acetylated and/or butyrylated. This chain is Bromodomain-containing protein 9 (brd9), found in Xenopus tropicalis (Western clawed frog).